Here is a 279-residue protein sequence, read N- to C-terminus: MANLRAQILEELGARPTIDAADEIRKRVQFLKDYLLSTPAKGFVLGISGGQDSTLTGRLAQLAASELRDEGHDAEFVAVRLPYGTQADESDAQISLDFIKPDRSVVVNVKPGADATAKESSEALRHIIGDGGELRDFVRGNIKARERMVIQYSIAGQLGYLVVGTDHAAEAITGFFTKFGDGGVDVTPLTGLSKRQGAALLRELGAPESTWKKVPTADLEDDRPALPDEEALGVTYAQIDDYLEGKDVPDAVAQKLETMFLNTRHKRAVPVTPLDTWWR.

46–53 (GISGGQDS) contributes to the ATP binding site. D52 contacts Mg(2+). Residue R145 coordinates deamido-NAD(+). T165 lines the ATP pocket. Position 170 (E170) interacts with Mg(2+). The deamido-NAD(+) site is built by K178 and D185. K194 and T216 together coordinate ATP. Deamido-NAD(+) is bound at residue 265–266 (HK).

It belongs to the NAD synthetase family. In terms of assembly, homodimer.

It catalyses the reaction deamido-NAD(+) + NH4(+) + ATP = AMP + diphosphate + NAD(+) + H(+). Its pathway is cofactor biosynthesis; NAD(+) biosynthesis; NAD(+) from deamido-NAD(+) (ammonia route): step 1/1. In terms of biological role, catalyzes the ATP-dependent amidation of deamido-NAD to form NAD. Uses ammonia as a nitrogen source. In Rhodococcus jostii (strain RHA1), this protein is NH(3)-dependent NAD(+) synthetase.